A 105-amino-acid polypeptide reads, in one-letter code: Pyrimidine/purine nucleoside phosphorylase (105 aa).

This sequence belongs to the nucleoside phosphorylase PpnP family.

It carries out the reaction a purine D-ribonucleoside + phosphate = a purine nucleobase + alpha-D-ribose 1-phosphate. It catalyses the reaction adenosine + phosphate = alpha-D-ribose 1-phosphate + adenine. The catalysed reaction is cytidine + phosphate = cytosine + alpha-D-ribose 1-phosphate. The enzyme catalyses guanosine + phosphate = alpha-D-ribose 1-phosphate + guanine. It carries out the reaction inosine + phosphate = alpha-D-ribose 1-phosphate + hypoxanthine. It catalyses the reaction thymidine + phosphate = 2-deoxy-alpha-D-ribose 1-phosphate + thymine. The catalysed reaction is uridine + phosphate = alpha-D-ribose 1-phosphate + uracil. The enzyme catalyses xanthosine + phosphate = alpha-D-ribose 1-phosphate + xanthine. Functionally, catalyzes the phosphorolysis of diverse nucleosides, yielding D-ribose 1-phosphate and the respective free bases. Can use uridine, adenosine, guanosine, cytidine, thymidine, inosine and xanthosine as substrates. Also catalyzes the reverse reactions. This is Pyrimidine/purine nucleoside phosphorylase from Cupriavidus pinatubonensis (strain JMP 134 / LMG 1197) (Cupriavidus necator (strain JMP 134)).